Reading from the N-terminus, the 345-residue chain is Phosphoribosylformylglycinamidine cyclo-ligase (345 aa).

The protein belongs to the AIR synthase family.

The protein localises to the cytoplasm. The enzyme catalyses 2-formamido-N(1)-(5-O-phospho-beta-D-ribosyl)acetamidine + ATP = 5-amino-1-(5-phospho-beta-D-ribosyl)imidazole + ADP + phosphate + H(+). The protein operates within purine metabolism; IMP biosynthesis via de novo pathway; 5-amino-1-(5-phospho-D-ribosyl)imidazole from N(2)-formyl-N(1)-(5-phospho-D-ribosyl)glycinamide: step 2/2. The sequence is that of Phosphoribosylformylglycinamidine cyclo-ligase from Limosilactobacillus fermentum (strain NBRC 3956 / LMG 18251) (Lactobacillus fermentum).